The following is a 231-amino-acid chain: UPF0758 protein pc1765 (231 aa).

Residues 107-229 form the MPN domain; sequence LIEHSSHAYQ…YVSFKDQNLL (123 aa). Zn(2+) contacts are provided by His178, His180, and Asp191. The JAMM motif motif lies at 178 to 191; it reads HNHPSGDPMPSNQD.

The protein belongs to the UPF0758 family.

The protein is UPF0758 protein pc1765 of Protochlamydia amoebophila (strain UWE25).